The following is a 1389-amino-acid chain: MNYTNALPDFLAMQRISFCWFITQGLTEELALFSRIQDFSQNTEYVMFGEEYSLIKPSYSLLIARKYSGNYRAQLVIPIEVRNKVVNSIRYHNQFPIITLPLMTTDATFIINGCERVIVSQIIRSPGVYFEKNKNQKTRNQFKKKLSTDINKLRSFIPSGEAFISEFDLFFPLPTSIYDPVKKKKKIIPHWQSNSIYYYSIKYLKQKQQNSTFYFLQSFKLYRVASKLLSSKSKQRVIQLFLKWLKLKNKSFEFQDEKQIYLIKYFNFLLTSLMKYEILQSSLTTKFNEDKTILLSKFTKSNAILNLSDKQIINLSMIYNKLIINSQTLAQMELNSNLFLITKEPREWLTEMSNFLFLKKQISKATFTLKSFQELTQLQNLKPAIYFSISLKEQLKYVFGKNKLTYKSDRHKYLKTKTQFLLYRKDHEIKTNYNKKYDEKDLYTATVIPEYGSWIRIGFQRNTKINSYKYPLKSQEDEVIIQLDKINQKPVLYLLKEMGLTDLEIYQNLEYADFFYFNKPLLINSKRLSEPLSRFNLGLSYFKNISEFSRIFDPTYYRLGRVGRLKINSRLNLKMSERLQTITYEDIFAITDKLINLTISKTVQDDIDHLKNRRVRSVGELLQNLFRIGFQRLGRKLRNQTNKIDSGQLLSFNIVNASIREFFGSSQLSQYLDQTNPLSSLTHRRRVSGLGPGGFDRDRISFAVRDIHPSHYGRICPIETPEGQNVGLIASLTTCARVNKSGFLETPFWRVINGKVVKTGQPVYLTADIEDFYKIAPADIATNKDNYLTKNVIPVRYKQDFVNVTPSEVDFIAISTIQVVSVAASLIPFFEHDDANRALMGSNMQRQSVPLLLPQKPIVGTGLENQIAIDSGMTLNSYSNGVVSSVTANKIVVNDKTGKRLTYKLQKYLRSNQQTCINHRPIVWKGEQVKSGQILTDGPAITSSELSLGQNVLIGYMPWQGYNFEDAILINERLVYDDVFTSIHIERYKIEIDRNSDTLERTTKNIPNLNPREIRHLNDDGIVTVGTFVRPGDILVGKVISNNTSEQLPESKLLRAIFGAKAKGVKDNSYRMSDGEYGRVIETVTFNRRTKLTYKFEKIYVFIAQIRKIQVGDKIAGRHGNKGIISRILSRQDMPFLPDGTPLDILLNPLGVPSRMNVGQLYECLLGLAGDKLNARFKILPFDEMYGLEISRILINKKLRQASIAKNESWLFNPYAPGKMVLIDGRTGKEFENPVTVGNAYMLKLIHLVDDKMHARATGPYSLITQQPLRGKAQHGGQRFGEMEVWALEGFGAAFTLKELLTIKSDDMQGRNETLNAIVKGQQIPKFGIPESFKVLLHELRSIGLDMSTYKINRFNSTKRYEVEVNLIEKYNALSKTFSPTSNINDISF.

Belongs to the RNA polymerase beta chain family. As to quaternary structure, in plastids the minimal PEP RNA polymerase catalytic core is composed of four subunits: alpha, beta, beta', and beta''. When a (nuclear-encoded) sigma factor is associated with the core the holoenzyme is formed, which can initiate transcription.

Its subcellular location is the plastid. The protein localises to the chloroplast. It catalyses the reaction RNA(n) + a ribonucleoside 5'-triphosphate = RNA(n+1) + diphosphate. Functionally, DNA-dependent RNA polymerase catalyzes the transcription of DNA into RNA using the four ribonucleoside triphosphates as substrates. This is DNA-directed RNA polymerase subunit beta from Phaeodactylum tricornutum (strain CCAP 1055/1).